The chain runs to 496 residues: E3 ubiquitin-protein ligase XIAP (496 aa).

BIR repeat units follow at residues 26 to 93 (EFNR…CRFI), 163 to 230 (EEAR…CFFV), and 264 to 329 (YDAR…CKYL). Residues cysteine 299, cysteine 302, and histidine 319 each coordinate Zn(2+). A Glycyl lysine isopeptide (Lys-Gly) (interchain with G-Cter in ubiquitin) cross-link involves residue lysine 321. Zn(2+) is bound at residue cysteine 326. Lysine 327 participates in a covalent cross-link: Glycyl lysine isopeptide (Lys-Gly) (interchain with G-Cter in ubiquitin). S-nitrosocysteine is present on cysteine 449. The segment at 449-484 (CKICMDRNIAIVFVPCGHLVTCKQCAEAVDKCPMCC) adopts an RING-type zinc-finger fold.

Belongs to the IAP family. In terms of assembly, monomer, and homodimer. Interacts (via BIR3 domain) with DIABLO/SMAC; the interaction inhibits apoptotic suppressor activity. Interacts with HTRA2/PRSS25; the interaction inhibits apoptotic suppressor activity. Interacts with TAB1/MAP3K7IP1 and AIFM1. Interaction with DIABLO/SMAC hinders binding of TAB1/MAP3K7IP1 and AIFM1. Interacts with TCF25 and COMMD1. Interacts (via BIR3 domain) with SEPTIN4. Interacts with RIP1, RIP2, RIP3, RIP4, CCS and USP19. Interacts (via BIR 2 domain and BIR 3 domain) with HAX1 (via C-terminus) and this interaction blocks ubiquitination of XIAP/BIRC4. Interacts with the monomeric form of BIRC5/survivin. Interacts with TLE3 and TCF7L2/TCF4. Interacts (via BIR 3 and RING domains) with PDCL3. S-Nitrosylation down-regulates its E3 ubiquitin-protein ligase activity. Post-translationally, autoubiquitinated. Ubiquitinated by TRIM32; leading to proteasomal degradation.

Its subcellular location is the cytoplasm. The protein resides in the nucleus. The enzyme catalyses S-ubiquitinyl-[E2 ubiquitin-conjugating enzyme]-L-cysteine + [acceptor protein]-L-lysine = [E2 ubiquitin-conjugating enzyme]-L-cysteine + N(6)-ubiquitinyl-[acceptor protein]-L-lysine.. Functionally, multi-functional protein which regulates not only caspases and apoptosis, but also modulates inflammatory signaling and immunity, copper homeostasis, mitogenic kinase signaling, cell proliferation, as well as cell invasion and metastasis. Acts as a direct caspase inhibitor. Directly bind to the active site pocket of CASP3 and CASP7 and obstructs substrate entry. Inactivates CASP9 by keeping it in a monomeric, inactive state. Acts as an E3 ubiquitin-protein ligase regulating NF-kappa-B signaling and the target proteins for its E3 ubiquitin-protein ligase activity include: RIPK1, RIPK2, MAP3K2/MEKK2, DIABLO/SMAC, AIFM1, CCS, PTEN and BIRC5/survivin. Acts as an important regulator of innate immunity by mediating 'Lys-63'-linked polyubiquitination of RIPK2 downstream of NOD1 and NOD2, thereby transforming RIPK2 into a scaffolding protein for downstream effectors, ultimately leading to activation of the NF-kappa-B and MAP kinases signaling. 'Lys-63'-linked polyubiquitination of RIPK2 also promotes recruitment of the LUBAC complex to RIPK2. Regulates the BMP signaling pathway and the SMAD and MAP3K7/TAK1 dependent pathways leading to NF-kappa-B and JNK activation. Ubiquitination of CCS leads to enhancement of its chaperone activity toward its physiologic target, SOD1, rather than proteasomal degradation. Ubiquitination of MAP3K2/MEKK2 and AIFM1 does not lead to proteasomal degradation. Plays a role in copper homeostasis by ubiquitinating COMMD1 and promoting its proteasomal degradation. Can also function as E3 ubiquitin-protein ligase of the NEDD8 conjugation pathway, targeting effector caspases for neddylation and inactivation. Ubiquitinates and therefore mediates the proteasomal degradation of BCL2 in response to apoptosis. Protects cells from spontaneous formation of the ripoptosome, a large multi-protein complex that has the capability to kill cancer cells in a caspase-dependent and caspase-independent manner. Suppresses ripoptosome formation by ubiquitinating RIPK1 and CASP8. Acts as a positive regulator of Wnt signaling and ubiquitinates TLE1, TLE2, TLE3, TLE4 and AES. Ubiquitination of TLE3 results in inhibition of its interaction with TCF7L2/TCF4 thereby allowing efficient recruitment and binding of the transcriptional coactivator beta-catenin to TCF7L2/TCF4 that is required to initiate a Wnt-specific transcriptional program. This Rattus norvegicus (Rat) protein is E3 ubiquitin-protein ligase XIAP (Xiap).